The sequence spans 387 residues: MISFGNVSALQAAMPQARNEILNEGKLSIGGKEYTINAATQEFTRANPTSGAVARFFEATGKLFREGSTQSVAKAITKAVFDNEQGQAQRLQTSSSVEHGQMLFKDANLKTPSDVLNAFAKLDSKMVKSHAAELSQLAERAMTEVMLETDSGKNLKALIGDDAVKSLAVRVVKDYGGGVAAAQKNPEVRINQMQAVFDMEVMHLKAAQRHIEGLASTDLNQGVYAEGLPEDAFNKAGVTNNVERAAAWIINASNSKGNDAENITSLLKEYATNGKDLLNMDNLKELHARLVPNVERDYRGPNISGGTLPSSIGGEGMLKQHIEGFLKENPVADKDLGKHLFAGVIGYHGFTDGNGRMGRMLYAIAELRNDSFNPLAMNAENSLHGIK.

Residues 76–77 (IT), 122–124 (LDS), 353–355 (GNG), and arginine 359 contribute to the ATP site. The Fido domain maps to 278–387 (LNMDNLKELH…NAENSLHGIK (110 aa)).

The protein resides in the secreted. It carries out the reaction L-tyrosyl-[protein] + ATP = O-(5'-adenylyl)-L-tyrosyl-[protein] + diphosphate. It catalyses the reaction L-threonyl-[protein] + ATP = 3-O-(5'-adenylyl)-L-threonyl-[protein] + diphosphate. Adenylyltransferase involved in virulence by mediating the addition of adenosine 5'-monophosphate (AMP) to specific threonine residue of host Rho GTPases RhoA, Rac and Cdc42. The resulting AMPylation prevents the interaction of Rho GTPases with downstream effectors, thereby inhibiting actin assembly in infected cells. The polypeptide is Protein adenylyltransferase VopS (vopS) (Vibrio parahaemolyticus serotype O3:K6 (strain RIMD 2210633)).